Here is a 1235-residue protein sequence, read N- to C-terminus: Bromodomain-containing protein 8 (1235 aa).

Residue lysine 85 is modified to N6-acetyllysine. Residues 97-171 (VRKLTAERVE…ATDAAYQARQ (75 aa)) adopt a coiled-coil conformation. Arginine 124 carries the post-translational modification Phosphothreonine. Leucine 128 and aspartate 144 each carry phosphoserine. Residues 186-205 (RSPIDSASPGGDYPLGDLTP) form a disordered region. Alanine 264 carries the phosphothreonine modification. Serine 268, serine 284, serine 383, and serine 387 each carry phosphoserine. Lysine 469 is covalently cross-linked (Glycyl lysine isopeptide (Lys-Gly) (interchain with G-Cter in SUMO2)). N6-acetyllysine; alternate is present on lysine 481. A Glycyl lysine isopeptide (Lys-Gly) (interchain with G-Cter in SUMO1); alternate cross-link involves residue lysine 481. A Glycyl lysine isopeptide (Lys-Gly) (interchain with G-Cter in SUMO2); alternate cross-link involves residue lysine 481. Glycyl lysine isopeptide (Lys-Gly) (interchain with G-Cter in SUMO2) cross-links involve residues lysine 509 and lysine 575. The disordered stretch occupies residues 551-597 (TAAGEIVEADVAIGKGDETPLTNVKTEASPESMLSPSHGSNPIEDPL). The residue at position 579 (serine 579) is a Phosphoserine. A Glycyl lysine isopeptide (Lys-Gly) (interchain with G-Cter in SUMO2) cross-link involves residue lysine 612. Residues serine 621, serine 637, and serine 641 each carry the phosphoserine modification. Residues 621-672 (SQIKDAPGEDEEEDGVSEAASLEEPKEEDQGEGYLSEMDNEPPVSESDDGFS) form a disordered region. The Bromo 1 domain maps to 706-811 (IQAQKIWKKA…RDVLEQIQQF (106 aa)). Disordered stretches follow at residues 827 to 848 (AKSLRGRDSTRKQDASEKDSVP), 903 to 940 (ETEDPEAEELEESSPEREPSELLVGDGGSEESQEAARK), and 966 to 999 (ESSEGCCPPSGTRQEGREIKASEGERELCRETEE). Residues 831–846 (RGRDSTRKQDASEKDS) are compositionally biased toward basic and acidic residues. The segment covering 905–915 (EDPEAEELEES) has biased composition (acidic residues). Leucine 924 is modified (phosphoserine). Basic and acidic residues predominate over residues 979–999 (QEGREIKASEGERELCRETEE). A Bromo 2 domain is found at 1099–1207 (DDPVQDHLLF…QEVLEQIQVL (109 aa)).

As to quaternary structure, component of the NuA4 histone acetyltransferase complex which contains the catalytic subunit KAT5/TIP60 and the subunits EP400, TRRAP/PAF400, BRD8/SMAP, EPC1, DMAP1/DNMAP1, RUVBL1/TIP49, RUVBL2, ING3, actin, ACTL6A/BAF53A, MORF4L1/MRG15, MORF4L2/MRGX, MRGBP, YEATS4/GAS41, VPS72/YL1 and MEAF6. The NuA4 complex interacts with MYC and the adenovirus E1A protein. Component of a NuA4-related complex which contains EP400, TRRAP/PAF400, SRCAP, BRD8/SMAP, EPC1, DMAP1/DNMAP1, RUVBL1/TIP49, RUVBL2, actin, ACTL6A/BAF53A, VPS72 and YEATS4/GAS41. BRD8 isoform 2 interacts with RXRA/NR2B1 and THRB/ERBA2. Component of a SWR1-like complex. Expressed in adipose tissue, brain, heart, kidney, liver, lung, pancreas, placenta and skeletal muscle.

It is found in the nucleus. Its function is as follows. May act as a coactivator during transcriptional activation by hormone-activated nuclear receptors (NR). Isoform 2 stimulates transcriptional activation by AR/DHTR, ESR1/NR3A1, RXRA/NR2B1 and THRB/ERBA2. At least isoform 1 and isoform 2 are components of the NuA4 histone acetyltransferase (HAT) complex which is involved in transcriptional activation of select genes principally by acetylation of nucleosomal histones H4 and H2A. This modification may both alter nucleosome - DNA interactions and promote interaction of the modified histones with other proteins which positively regulate transcription. This complex may be required for the activation of transcriptional programs associated with oncogene and proto-oncogene mediated growth induction, tumor suppressor mediated growth arrest and replicative senescence, apoptosis, and DNA repair. NuA4 may also play a direct role in DNA repair when recruited to sites of DNA damage. Component of a SWR1-like complex that specifically mediates the removal of histone H2A.Z/H2AZ1 from the nucleosome. The chain is Bromodomain-containing protein 8 (BRD8) from Homo sapiens (Human).